The chain runs to 206 residues: MKKLLCAVLLSPLLYSNAVLADDAKQLRETLNGTESLKADFKQTVTDINKKVIQTGAGVFALAHPNQFYWHLTAPDESQIVADGKDLWIYNPFAEEVVIMDFAEAINASPIALLVHRDDATWSQYSVAKKQDCYEIKPKATDAGISSVNVCFNKGTLNKFNVLDDKGNQSQFDLSNQHSISAADKALFKFVLPENVDVDDQRLKSQ.

Positions 1-21 (MKKLLCAVLLSPLLYSNAVLA) are cleaved as a signal peptide.

Belongs to the LolA family. In terms of assembly, monomer.

The protein localises to the periplasm. Functionally, participates in the translocation of lipoproteins from the inner membrane to the outer membrane. Only forms a complex with a lipoprotein if the residue after the N-terminal Cys is not an aspartate (The Asp acts as a targeting signal to indicate that the lipoprotein should stay in the inner membrane). The sequence is that of Outer-membrane lipoprotein carrier protein from Shewanella sp. (strain ANA-3).